The following is a 908-amino-acid chain: MAAAAGAEGRRAALEAVAAPERGGGSCVLCCGDLEATALGRCDHPVCYRCSTKMRVLCEQRYCAVCREELRQVVFGKKLPAFALIPIHQLQHEKKYDIYFADGKVFALYRQLLQHECPRCPHLPPFSLFGDLEQHMRKQHELFCCKLCLKHLKIFTYERKWYSRKDLARHRMQGDPDDTSHRGHPLCKFCDERYLDNDELLKHLRRDHYFCHFCDSDGAQDYYSDYAYLREHFREKHFLCEEGRCSTEQFTHAFRTEIDLKAHKTACHSRSRAEARQNRQIDLQFSFAPRHSRRSEGVVSGEDYEEVDRYNRQGRAGRASGRGAQQNRRGSWRYKREEEDREVAAAIRASVAAQQQEETQRVEDREEGSRPKKEEAAARVPEEPRGHRRLPRAQGEGSGSKEASANGPVSQEAFPATGPGPVVALSNTLPPPSPELKEEDFPSLCASTSSCCTAVTPGSVGLALAYPGPPRGKNTFQEEDFPALVSSAPKPSSAPSSLISAWNSGCSKKGNLPTPGSQAVVGGSQPPRKAGKGSRGGRKGGPAPVDEEDSGGLTVQGLRSVPTTVAVSSLLAPATNQSSAKVGKKKKVGSEKPGATSSPLLPPDHTPKPSGAEQVLEAPLSKAEVPVTIVVNGHSEGSALVRSAPKEPPGLPRPLGPLPCPIPQEDFPALGGPCPPRMPPPPGFSTVVLLKGTPPPPPPPPGLVPPISKPPPGFSSLLPSSHSACAPSPTTTTTTTTTTKTPGLAPTPQAYLVPENFRERNLQLIQSIKDFLQSDEACFSKFKSHSGEFRQGMISAAQYYKSCRDLLGESFQKIFSELLALLPDTAKQQELLSAHTDFCSREKPPNSRSKRNKKNVWQTSTQQLGLDCCVCPTCQQVLAHGDVSSHQALHAARDDDFPSLQAIARIIT.

Residues 27–67 (CVLCCGDLEATALGRCDHPVCYRCSTKMRVLCEQRYCAVCR) form an RING-type zinc finger. The C2H2-type zinc-finger motif lies at 185–208 (PLCKFCDERYLDNDELLKHLRRDH). Disordered stretches follow at residues 292–338 (SRRS…KREE), 350–441 (SVAA…EEDF), 467–557 (PGPP…TVQG), 569–619 (SLLA…LEAP), and 719–744 (PSSHSACAPSPTTTTTTTTTTKTPGL). Ser-295 carries the phosphoserine modification. A Phosphotyrosine modification is found at Tyr-304. The segment covering 313–329 (QGRAGRASGRGAQQNRR) has biased composition (low complexity). The segment covering 358–385 (ETQRVEDREEGSRPKKEEAAARVPEEPR) has biased composition (basic and acidic residues). Ser-433 carries the post-translational modification Phosphoserine. Residues 482–501 (PALVSSAPKPSSAPSSLISA) are compositionally biased toward low complexity. Residues 529-538 (KAGKGSRGGR) show a composition bias toward basic residues.

It belongs to the ZNF598/HEL2 family. As to quaternary structure, interacts with the E2 ubiquitin-conjugating enzyme UBE2D3. Component of the 4EHP-GYF2 complex, at least composed of EIF4E2, GIGYF2 and ZNF598.

The protein localises to the cytoplasm. It is found in the cytosol. The enzyme catalyses S-ubiquitinyl-[E2 ubiquitin-conjugating enzyme]-L-cysteine + [acceptor protein]-L-lysine = [E2 ubiquitin-conjugating enzyme]-L-cysteine + N(6)-ubiquitinyl-[acceptor protein]-L-lysine.. The protein operates within protein modification; protein ubiquitination. In terms of biological role, E3 ubiquitin-protein ligase that plays a key role in the ribosome quality control (RQC), a pathway that takes place when a ribosome has stalled during translation, leading to degradation of nascent peptide chains. ZNF598 is activated when ribosomes are stalled within an mRNA following translation of prematurely polyadenylated mRNAs. Acts as a ribosome collision sensor: specifically recognizes and binds collided di-ribosome, which arises when a trailing ribosome encounters a slower leading ribosome, leading to terminally arrest translation. Following binding to colliding ribosomes, mediates monoubiquitination of 40S ribosomal proteins RPS10/eS10 and RPS3/uS3, and 'Lys-63'-linked polyubiquitination of RPS20/uS10. Polyubiquitination of RPS20/uS10 promotes recruitment of the RQT (ribosome quality control trigger) complex, which drives the disassembly of stalled ribosomes, followed by degradation of nascent peptides. E3 ubiquitin-protein ligase activity is dependent on the E2 ubiquitin-conjugating enzyme UBE2D3. Also acts as an adapter that recruits the 4EHP-GYF2 complex to mRNAs. Independently of its role in RQC, may also act as a negative regulator of interferon-stimulated gene (ISG) expression. This is E3 ubiquitin-protein ligase ZNF598 from Mus musculus (Mouse).